Reading from the N-terminus, the 495-residue chain is Ankyrin repeat domain-containing protein 34A (495 aa).

4 ANK repeats span residues 4-33, 37-72, 76-106, and 110-139; these read TEGH…YVNE, QGET…DPNI, LGRT…DPSV, and AGAS…AKGT. The residue at position 15 (Gln-15) is an N5-methylglutamine. 2 stretches are compositionally biased toward polar residues: residues 147-162 and 180-191; these read DTSP…YLNS and VCTSPSEVQLQT. The segment at 147-495 is disordered; sequence DTSPSGTKKT…SLGGPGEPGR (349 aa). The segment covering 203–213 has biased composition (basic and acidic residues); that stretch reads AQEEEEKRDVF. Over residues 223 to 232 the composition is skewed to pro residues; sequence DPSPSEPLPK. The span at 233 to 242 shows a compositional bias: basic residues; the sequence is PPRHPPKPLK. The residue at position 315 (Thr-315) is a Phosphothreonine. Positions 375-385 are enriched in polar residues; the sequence is SVSSPRQSQES. The span at 462-472 shows a compositional bias: basic residues; the sequence is RTKRKLVRRHS. Over residues 485 to 495 the composition is skewed to gly residues; sequence QSLGGPGEPGR.

The protein belongs to the ANKRD34 family. Post-translationally, methylated at Gln-15 by N6AMT1.

The polypeptide is Ankyrin repeat domain-containing protein 34A (Ankrd34a) (Rattus norvegicus (Rat)).